Reading from the N-terminus, the 117-residue chain is MDDDFLFMTLLYDFYGALLTDKQREIFEMYYLNDYSLGEISELLDISRQGVYDTLKRAESSLEFFEEKLGLVKRHQEIMNKLDKIKKGIEIIRERERDPEILKIIEEIAREIEELNL.

This sequence belongs to the UPF0122 family.

Its function is as follows. Might take part in the signal recognition particle (SRP) pathway. This is inferred from the conservation of its genetic proximity to ftsY/ffh. May be a regulatory protein. This is UPF0122 protein Teth514_1714 from Thermoanaerobacter sp. (strain X514).